Consider the following 428-residue polypeptide: Stabilizer of axonemal microtubules 4 (428 aa).

The segment at 201–231 (AKEETGFTEESNKNPIVFQPPSQALPGDPVL) is disordered.

In terms of assembly, microtubule inner protein component of sperm flagellar doublet microtubules. Interacts with PPP1CA.

The protein localises to the cell projection. The protein resides in the cilium. It is found in the cytoplasm. Its subcellular location is the cytoskeleton. It localises to the flagellum axoneme. The protein is Stabilizer of axonemal microtubules 4 of Bos taurus (Bovine).